We begin with the raw amino-acid sequence, 367 residues long: THO complex subunit 6 (367 aa).

7 WD repeats span residues 23 to 67, 88 to 129, 157 to 196, 199 to 240, 243 to 283, 285 to 322, and 324 to 363; these read IETR…SQSA, AHEG…ESDV, SPMPEINAMSVDPQSGSVFTAAGDSCAYCWDVESGKIKMT, GHSD…KVIG, DKKS…CVQT, PIPAHVQDVMFDEKQILTVGAEPLLRRFDLNGALLSQI, and CAPCSVFSISLHPAGVVAVGGYGGIVDVISQFGSHLCTFR.

It belongs to the WD repeat THOC6 family. Component of the THO complex, which is composed of THO1, THO2, THO3, THO5, THO6 and THO7. Interacts with ABI5, DDB1A and DWA2.

It is found in the nucleus. It functions in the pathway protein modification; protein ubiquitination. Functionally, acts as a component of the THO subcomplex of the TREX complex which is thought to couple mRNA transcription, processing and nuclear export. In terms of biological role, component of the CUL4-RBX1-DDB1-DWA1/DWA2 E3 ubiquitin-protein ligase complex that acts as a negative regulator in abscisic acid (ABA) signaling. May function as the substrate recognition module within this complex leading to ABI5 degradation. Functionally redundant with DWA2. This chain is THO complex subunit 6 (THO6), found in Arabidopsis thaliana (Mouse-ear cress).